Reading from the N-terminus, the 637-residue chain is Phosphomethylpyrimidine synthase (637 aa).

Residues N242, M271, Y300, H336, S356–G358, D397–R400, and E436 contribute to the substrate site. H440 contributes to the Zn(2+) binding site. Y463 provides a ligand contact to substrate. H504 provides a ligand contact to Zn(2+). Residues C584, C587, and C592 each coordinate [4Fe-4S] cluster.

It belongs to the ThiC family. As to quaternary structure, homodimer. Requires [4Fe-4S] cluster as cofactor.

It carries out the reaction 5-amino-1-(5-phospho-beta-D-ribosyl)imidazole + S-adenosyl-L-methionine = 4-amino-2-methyl-5-(phosphooxymethyl)pyrimidine + CO + 5'-deoxyadenosine + formate + L-methionine + 3 H(+). Its pathway is cofactor biosynthesis; thiamine diphosphate biosynthesis. Functionally, catalyzes the synthesis of the hydroxymethylpyrimidine phosphate (HMP-P) moiety of thiamine from aminoimidazole ribotide (AIR) in a radical S-adenosyl-L-methionine (SAM)-dependent reaction. This chain is Phosphomethylpyrimidine synthase, found in Bordetella bronchiseptica (strain ATCC BAA-588 / NCTC 13252 / RB50) (Alcaligenes bronchisepticus).